A 492-amino-acid polypeptide reads, in one-letter code: Protein nucleotidyltransferase YdiU (492 aa).

Residues G88, G90, R91, K111, D123, G124, R174, and R181 each contribute to the ATP site. D250 acts as the Proton acceptor in catalysis. Positions 251 and 260 each coordinate Mg(2+). An ATP-binding site is contributed by D260.

This sequence belongs to the SELO family. Mg(2+) is required as a cofactor. Mn(2+) serves as cofactor.

It catalyses the reaction L-seryl-[protein] + ATP = 3-O-(5'-adenylyl)-L-seryl-[protein] + diphosphate. It carries out the reaction L-threonyl-[protein] + ATP = 3-O-(5'-adenylyl)-L-threonyl-[protein] + diphosphate. The enzyme catalyses L-tyrosyl-[protein] + ATP = O-(5'-adenylyl)-L-tyrosyl-[protein] + diphosphate. The catalysed reaction is L-histidyl-[protein] + UTP = N(tele)-(5'-uridylyl)-L-histidyl-[protein] + diphosphate. It catalyses the reaction L-seryl-[protein] + UTP = O-(5'-uridylyl)-L-seryl-[protein] + diphosphate. It carries out the reaction L-tyrosyl-[protein] + UTP = O-(5'-uridylyl)-L-tyrosyl-[protein] + diphosphate. Functionally, nucleotidyltransferase involved in the post-translational modification of proteins. It can catalyze the addition of adenosine monophosphate (AMP) or uridine monophosphate (UMP) to a protein, resulting in modifications known as AMPylation and UMPylation. The polypeptide is Protein nucleotidyltransferase YdiU (Rhodopseudomonas palustris (strain TIE-1)).